Reading from the N-terminus, the 275-residue chain is Penicillin-insensitive murein endopeptidase (275 aa).

Positions 1-19 are cleaved as a signal peptide; sequence MKKWIAGLLALIAISPVMA. 3 disulfide bridges follow: Cys-44/Cys-264, Cys-187/Cys-235, and Cys-216/Cys-223. His-110, His-113, Asp-120, Asp-147, and His-211 together coordinate Zn(2+). Residues 234 to 262 form a disordered region; the sequence is GCGAELESWFQPHQPSAKPGKTLPPPLPP.

This sequence belongs to the peptidase M74 family. In terms of assembly, dimer. It depends on Zn(2+) as a cofactor.

It localises to the periplasm. In terms of biological role, murein endopeptidase that cleaves the D-alanyl-meso-2,6-diamino-pimelyl amide bond that connects peptidoglycan strands. Likely plays a role in the removal of murein from the sacculus. This is Penicillin-insensitive murein endopeptidase from Yersinia enterocolitica serotype O:8 / biotype 1B (strain NCTC 13174 / 8081).